Here is a 144-residue protein sequence, read N- to C-terminus: Elicitor-responsive protein 3 (144 aa).

The C2 domain occupies 1 to 103 (MVQGTLEVLL…YTEGSIPPTV (103 aa)). The Ca(2+) site is built by D20, D26, D73, D75, and D81. Residues 123–144 (TPEDDRDRGLSEEDIGGWKQSS) are disordered.

Ca(2+) is required as a cofactor.

The protein is Elicitor-responsive protein 3 (ERG3) of Oryza sativa subsp. indica (Rice).